The primary structure comprises 567 residues: Lactase-like protein (567 aa).

Positions 1–21 (MKPVWVATLLWMLLLVPRLGA) are cleaved as a signal peptide. Topologically, residues 23-541 (RKGSPEEASF…LLSHMQMVTE (519 aa)) are extracellular. 3 N-linked (GlcNAc...) asparagine glycosylation sites follow: N80, N171, and N245. Residues 542-562 (IVVPTVCSLCVLITAVLLMLL) form a helical membrane-spanning segment. Residues 563–567 (LRRQS) lie on the Cytoplasmic side of the membrane.

This sequence belongs to the glycosyl hydrolase 1 family. Klotho subfamily. In terms of assembly, may form dimers.

It localises to the endoplasmic reticulum membrane. In terms of biological role, plays a role in formation of the lens suture in the eye, which is important for normal optical properties of the lens. This is Lactase-like protein (LCTL) from Homo sapiens (Human).